A 158-amino-acid polypeptide reads, in one-letter code: Transcription elongation factor GreA (158 aa).

A coiled-coil region spans residues 14–76 (VKKLEEELEY…QIENMLKNAN (63 aa)).

Belongs to the GreA/GreB family.

In terms of biological role, necessary for efficient RNA polymerase transcription elongation past template-encoded arresting sites. The arresting sites in DNA have the property of trapping a certain fraction of elongating RNA polymerases that pass through, resulting in locked ternary complexes. Cleavage of the nascent transcript by cleavage factors such as GreA or GreB allows the resumption of elongation from the new 3'terminus. GreA releases sequences of 2 to 3 nucleotides. In Clostridium acetobutylicum (strain ATCC 824 / DSM 792 / JCM 1419 / IAM 19013 / LMG 5710 / NBRC 13948 / NRRL B-527 / VKM B-1787 / 2291 / W), this protein is Transcription elongation factor GreA.